Reading from the N-terminus, the 179-residue chain is Fucolectin-4 (179 aa).

Positions 1–23 (MEVKTIMLLFQILAISTLKQGSA) are cleaved as a signal peptide. Residues 31-179 (EENVALRGRA…VEVNALLPVN (149 aa)) form an F5/8 type C-like region. The Ca(2+) site is built by Asn58, Asp61, Asn63, and Ser72. 3 disulfide bridges follow: Cys73/Cys168, Cys104/Cys105, and Cys130/Cys146. Alpha-L-fucose contacts are provided by His75 and Arg101. Residues 101–103 (RGD) carry the Cell attachment site motif. Residue Arg108 coordinates alpha-L-fucose. Residues Cys168 and Glu169 each contribute to the Ca(2+) site.

Belongs to the fucolectin family. Homotrimer. As to expression, gill mucous cells.

The protein resides in the secreted. Its function is as follows. Acts as a defensive agent. Recognizes blood group fucosylated oligosaccharides including A, B, H and Lewis B-type antigens. Does not recognize Lewis A antigen and has low affinity for monovalent haptens. The polypeptide is Fucolectin-4 (Anguilla japonica (Japanese eel)).